The sequence spans 213 residues: Phosphatidylethanolamine N-methyltransferase A (213 aa).

Residues 1 to 21 (MIVEHAIDYIDYLMNYVDFTE) are Lumenal-facing. An intramembrane region (helical) is located at residues 22-42 (KYFLLTIACVVFNPTWWNITA). The Lumenal segment spans residues 43–54 (RMEYKTKFMTKI). A helical membrane pass occupies residues 55-75 (CGSKENGCYLLAFLIFSLGIL). At 76 to 102 (RDWLFSEALIRQPIFQEFDRFEVEVLS) the chain is on the cytoplasmic side. The chain crosses the membrane as a helical span at residues 103 to 123 (YILYGFGGILVLAAYLKLGIT). 107–109 (GFG) is a binding site for S-adenosyl-L-methionine. Over 124 to 166 (GTYLGDYFGILMKERVTGFPFNVMNNPMYNGSVMLFIAHALSY) the chain is Lumenal. Residues 167-187 (KSVAGLVLSFVVYVVYKFALI) traverse the membrane as a helical segment. Residues 188-213 (FEESFTNYIYSTAAANAAKKNKSKSK) are Cytoplasmic-facing. 189–190 (EE) provides a ligand contact to S-adenosyl-L-methionine.

Belongs to the class VI-like SAM-binding methyltransferase superfamily. PEMT/PEM2 methyltransferase family.

It localises to the endoplasmic reticulum membrane. It is found in the mitochondrion membrane. It catalyses the reaction a 1,2-diacyl-sn-glycero-3-phospho-N-methylethanolamine + S-adenosyl-L-methionine = a 1,2-diacyl-sn-glycero-3-phospho-N,N-dimethylethanolamine + S-adenosyl-L-homocysteine + H(+). The catalysed reaction is a 1,2-diacyl-sn-glycero-3-phospho-N,N-dimethylethanolamine + S-adenosyl-L-methionine = a 1,2-diacyl-sn-glycero-3-phosphocholine + S-adenosyl-L-homocysteine + H(+). It carries out the reaction a 1,2-diacyl-sn-glycero-3-phosphoethanolamine + S-adenosyl-L-methionine = a 1,2-diacyl-sn-glycero-3-phospho-N-methylethanolamine + S-adenosyl-L-homocysteine + H(+). The protein operates within phospholipid metabolism; phosphatidylcholine biosynthesis. Its function is as follows. Catalyzes the three sequential steps of the methylation pathway of phosphatidylcholine biosynthesis, the SAM-dependent methylation of phosphatidylethanolamine (PE) to phosphatidylmonomethylethanolamine (PMME), PMME to phosphatidyldimethylethanolamine (PDME), and PDME to phosphatidylcholine (PC). In Dictyostelium discoideum (Social amoeba), this protein is Phosphatidylethanolamine N-methyltransferase A (pemtA).